A 60-amino-acid chain; its full sequence is Large ribosomal subunit protein bL32 (60 aa).

The interval 1 to 43 is disordered; it reads MAVQQNRKTRSRRGMRRSHDALTGKTLSVDSTTGEKHLRHHVT. The span at 7–16 shows a compositional bias: basic residues; sequence RKTRSRRGMR.

This sequence belongs to the bacterial ribosomal protein bL32 family.

This is Large ribosomal subunit protein bL32 from Saccharophagus degradans (strain 2-40 / ATCC 43961 / DSM 17024).